A 588-amino-acid chain; its full sequence is L-fucose isomerase (588 aa).

Catalysis depends on proton acceptor residues glutamate 335 and aspartate 359. Mn(2+) contacts are provided by glutamate 335, aspartate 359, and histidine 525.

This sequence belongs to the L-fucose isomerase family. The cofactor is Mn(2+).

It localises to the cytoplasm. It carries out the reaction L-fucose = L-fuculose. It functions in the pathway carbohydrate degradation; L-fucose degradation; L-lactaldehyde and glycerone phosphate from L-fucose: step 1/3. Converts the aldose L-fucose into the corresponding ketose L-fuculose. This chain is L-fucose isomerase, found in Streptococcus pneumoniae (strain Taiwan19F-14).